The primary structure comprises 142 residues: Hemoglobin subunit alpha (142 aa).

In terms of domain architecture, Globin spans 2–142 (VLSPADKSNV…VSTVLTSKYR (141 aa)). Position 4 is a phosphoserine (Ser4). 2 positions are modified to N6-succinyllysine: Lys8 and Lys12. Lys17 is modified (N6-acetyllysine; alternate). Position 17 is an N6-succinyllysine; alternate (Lys17). Residue Tyr25 is modified to Phosphotyrosine. Ser36 carries the post-translational modification Phosphoserine. Position 41 is an N6-succinyllysine (Lys41). A Phosphoserine modification is found at Ser50. O2 is bound at residue His59. A heme b-binding site is contributed by His88. At Ser103 the chain carries Phosphoserine. Position 109 is a phosphothreonine (Thr109). 2 positions are modified to phosphoserine: Ser125 and Ser132. Phosphothreonine is present on residues Thr135 and Thr138. At Ser139 the chain carries Phosphoserine.

Belongs to the globin family. In terms of assembly, heterotetramer of two alpha chains and two beta chains. In terms of tissue distribution, red blood cells.

Functionally, involved in oxygen transport from the lung to the various peripheral tissues. Hemopressin acts as an antagonist peptide of the cannabinoid receptor CNR1. Hemopressin-binding efficiently blocks cannabinoid receptor CNR1 and subsequent signaling. This Ateles geoffroyi (Black-handed spider monkey) protein is Hemoglobin subunit alpha (HBA).